The following is a 371-amino-acid chain: GDSL esterase/lipase At3g27950 (371 aa).

An N-terminal signal peptide occupies residues 1–23; sequence MAISKITLAIIVLLLGFTEKLSA. Serine 39 serves as the catalytic Nucleophile. Asparagine 82, asparagine 143, asparagine 178, asparagine 194, and asparagine 315 each carry an N-linked (GlcNAc...) asparagine glycan. Catalysis depends on residues aspartate 334 and histidine 337.

The protein belongs to the 'GDSL' lipolytic enzyme family.

The protein resides in the secreted. This chain is GDSL esterase/lipase At3g27950, found in Arabidopsis thaliana (Mouse-ear cress).